A 419-amino-acid polypeptide reads, in one-letter code: Imidazolonepropionase (419 aa).

Residues histidine 82 and histidine 84 each coordinate Fe(3+). Zn(2+) is bound by residues histidine 82 and histidine 84. Residues arginine 91, tyrosine 154, and histidine 187 each coordinate 4-imidazolone-5-propanoate. An N-formimidoyl-L-glutamate-binding site is contributed by tyrosine 154. Histidine 252 is a Fe(3+) binding site. Residue histidine 252 participates in Zn(2+) binding. Glutamate 255 is a binding site for 4-imidazolone-5-propanoate. Aspartate 326 serves as a coordination point for Fe(3+). Residue aspartate 326 participates in Zn(2+) binding. Positions 328 and 330 each coordinate N-formimidoyl-L-glutamate. Position 331 (serine 331) interacts with 4-imidazolone-5-propanoate.

Belongs to the metallo-dependent hydrolases superfamily. HutI family. It depends on Zn(2+) as a cofactor. Fe(3+) is required as a cofactor.

It localises to the cytoplasm. It catalyses the reaction 4-imidazolone-5-propanoate + H2O = N-formimidoyl-L-glutamate. It participates in amino-acid degradation; L-histidine degradation into L-glutamate; N-formimidoyl-L-glutamate from L-histidine: step 3/3. Catalyzes the hydrolytic cleavage of the carbon-nitrogen bond in imidazolone-5-propanoate to yield N-formimidoyl-L-glutamate. It is the third step in the universal histidine degradation pathway. The polypeptide is Imidazolonepropionase (Clostridium tetani (strain Massachusetts / E88)).